Reading from the N-terminus, the 337-residue chain is Ribosomal RNA small subunit methyltransferase H (337 aa).

S-adenosyl-L-methionine contacts are provided by residues 36 to 38 (GGH), Asp-56, Phe-82, Asp-100, and Gln-107. The tract at residues 314–337 (GLERRSGRIPNPRSPIPASQGDAR) is disordered.

This sequence belongs to the methyltransferase superfamily. RsmH family.

Its subcellular location is the cytoplasm. It catalyses the reaction cytidine(1402) in 16S rRNA + S-adenosyl-L-methionine = N(4)-methylcytidine(1402) in 16S rRNA + S-adenosyl-L-homocysteine + H(+). In terms of biological role, specifically methylates the N4 position of cytidine in position 1402 (C1402) of 16S rRNA. This is Ribosomal RNA small subunit methyltransferase H from Xanthomonas oryzae pv. oryzae (strain PXO99A).